The sequence spans 412 residues: 46 kDa FK506-binding nuclear protein (412 aa).

Acidic residues-rich tracts occupy residues 95-113, 169-178, and 188-216; these read EEDLEDEEEAEEEEEEEEA, GEDIDTDEND, and EGDDSDEEDDDEDEEDEEDDDEDDEEEEE. The interval 95–304 is disordered; sequence EEDLEDEEEA…PVEKKEKKQI (210 aa). Residues 247–257 show a composition bias toward basic residues; that stretch reads KSQKRRLKKKL. Over residues 271–303 the composition is skewed to basic and acidic residues; sequence DKPKKEEPQQKAEKKKPEAKKEEAPVEKKEKKQ. The 89-residue stretch at 324-412 folds into the PPIase FKBP-type domain; it reads GKVVMVYYEG…VFEVDLKNVK (89 aa).

The protein belongs to the FKBP-type PPIase family. In terms of processing, phosphorylated by a nuclear kinase in the presence of Mg(2+) and ATP.

It is found in the nucleus. It carries out the reaction [protein]-peptidylproline (omega=180) = [protein]-peptidylproline (omega=0). Inhibited by both FK506 and rapamycin. PPIases accelerate the folding of proteins. It catalyzes the cis-trans isomerization of proline imidic peptide bonds in oligopeptides. Binds double-stranded DNA in vitro. The polypeptide is 46 kDa FK506-binding nuclear protein (FKBP46) (Spodoptera frugiperda (Fall armyworm)).